A 381-amino-acid chain; its full sequence is DNA double-strand break repair protein Mre11 (381 aa).

The Mn(2+) site is built by D9, H11, D50, and D85. Residue H86 is the Proton donor of the active site. Positions 156, 187, and 189 each coordinate Mn(2+).

It belongs to the MRE11/RAD32 family. In terms of assembly, homodimer. Forms a heterotetramer composed of two Mre11 subunits and two Rad50 subunits. It depends on Mn(2+) as a cofactor.

Its activity is regulated as follows. Nuclease activity is regulated by Rad50. Functionally, part of the Rad50/Mre11 complex, which is involved in the early steps of DNA double-strand break (DSB) repair. The complex may facilitate opening of the processed DNA ends to aid in the recruitment of HerA and NurA. Mre11 binds to DSB ends and has both double-stranded 3'-5' exonuclease activity and single-stranded endonuclease activity. This Saccharolobus solfataricus (strain ATCC 35092 / DSM 1617 / JCM 11322 / P2) (Sulfolobus solfataricus) protein is DNA double-strand break repair protein Mre11.